The primary structure comprises 635 residues: Ankyrin repeat and SOCS box protein 2 (635 aa).

The required for FLNA degradation stretch occupies residues 8 to 16 (RGSQCTIGQ). In terms of domain architecture, UIM spans 26-45 (SEDELVQMAIEQSLADKTRG). ANK repeat units lie at residues 104 to 133 (APAD…NLAE), 137 to 167 (EGWL…TIDQ), 171 to 200 (QEET…EPDI), 204 to 233 (SRET…DTNH), 237 to 266 (RGWT…KVES), 270 to 299 (YGIT…DINT), 303 to 332 (DNAS…DANK), 336 to 365 (DGLL…RTRI), 368 to 397 (SGVS…DVNT), 410 to 439 (RRSS…DPNR), 440 to 469 (DVIS…NIDA), and 476 to 504 (TAFP…DGEP). Serine 371 is subject to Phosphoserine; by MAPK. The SOCS box domain maps to 586–635 (IKEKAEPPRPLAHLCRLRVRKAIGKYRIKLLDTLPLPGRLIRYLKYENTQ).

The protein belongs to the ankyrin SOCS box (ASB) family. Component of a probable ECS E3 ubiquitin-protein ligase complex which contains CUL5, either RBX1 or RNF7/RBX2, Elongin BC complex (ELOB and ELOC) and ASB2. Interacts with SKP2. Through its interaction with SKP2, likely to bridge the formation of dimeric E3-ubiquitin-protein ligase complexes composed of an ECS complex and an SCF(SKP2) complex. Interacts with JAK2; the interaction targets JAK2 for Notch-mediated proteasomal degradation. Interacts with TCF3/E2A; the interaction is mediated by SKP2 and targets TCF3 for Notch-mediated proteasomal degradation. As to quaternary structure, interacts with DES. Post-translationally, monoubiquitinated. Not monoubiquitinated. In terms of processing, phosphorylation at Ser-371 is required for association with FLNA and subsequent FLNA degradation. In terms of tissue distribution, expressed in muscle cells. Expressed in hematopoietic cells.

The protein resides in the cytoplasm. It localises to the cytoskeleton. The protein localises to the stress fiber. It is found in the myofibril. Its subcellular location is the sarcomere. The protein resides in the z line. The protein operates within protein modification; protein ubiquitination. Functionally, substrate-recognition component of a SCF-like ECS (Elongin-Cullin-SOCS-box protein) E3 ubiquitin-protein ligase complex which mediates the ubiquitination and subsequent proteasomal degradation of target proteins. Mediates Notch-induced ubiquitination and degradation of substrates including TCF3/E2A and JAK2. Required during embryonic heart development for complete heart looping. Required for cardiomyocyte differentiation. Specifically promotes the ubiquitination of SMAD9 and targets it for proteasomal degradation, leading to avoid excessive accumulation of SMAD9. Plays a role in the regulation of NK-cell migration by modulating protein levels of filamin A/FLNA via regulation of its ubiquitination and proteasome degradation. In terms of biological role, involved in myogenic differentiation and targets filamin FLNB for proteasomal degradation but not filamin FLNA. Also targets DES for proteasomal degradation. Acts as a negative regulator of skeletal muscle mass. Targets filamins FLNA and FLNB for proteasomal degradation. This leads to enhanced adhesion of hematopoietic cells to fibronectin. Required for FLNA degradation in immature cardiomyocytes which is necessary for actin cytoskeleton remodeling, leading to proper organization of myofibrils and function of mature cardiomyocytes. Required for degradation of FLNA and FLNB in immature dendritic cells (DC) which enhances immature DC migration by promoting DC podosome formation and DC-mediated degradation of the extracellular matrix. Does not promote proteasomal degradation of tyrosine-protein kinases JAK1 or JAK2 in hematopoietic cells. The chain is Ankyrin repeat and SOCS box protein 2 (ASB2) from Homo sapiens (Human).